The following is a 394-amino-acid chain: Xylose isomerase (394 aa).

Residues His54 and Asp57 contribute to the active site. 7 residues coordinate Mg(2+): Glu181, Glu217, His220, Asp245, Asp255, Asp257, and Asp292.

Belongs to the xylose isomerase family. As to quaternary structure, homotetramer. Requires Mg(2+) as cofactor.

The protein localises to the cytoplasm. It carries out the reaction alpha-D-xylose = alpha-D-xylulofuranose. This chain is Xylose isomerase (xylA), found in Actinoplanes sp. (strain ATCC 31351 / 3876) (Ampullariella sp.).